Consider the following 515-residue polypeptide: MKKKILLMMSLISVFFAWQLTQAKQVLAEGKVKVVTTFYPVYEFTKGIVGNDGDVSMLMKAGTEPHDFEPSTKDIKKIQDADAFVYMDDNMETWVSDVKKSLTSKKVTIVKGTGNMLLVAGVGHDHHHEEADKKHEHNKHSEEGHNHAFDPHVWLSPYRSITVVENIRDSLSKAYPEKAENFKANAATYIEKLKELDKDYTAALSDAKQKSFVTQHAAFGYMALDYGLNQISINGVIPDAEPSAKRIATLSKYVKKYGIKYIYFEENASSKVAKTLAKEAGVKAAVLSPLEGLTEKEMKAGQDYFTVMRKNLETLRLTTDVAGKEILPEKDTTKTVYNGYFKDKEVKDRQLSDWSGSWQSVYPYLQDGTLDQVWDYKAKKSKGKMTAAEYKDYYTTGYKTDVEQIKINGKKKTMTFVRNGEKKTFTYTYAGKEILTYPKGNRGVRFMFEAKEPNAGEFKYVQFSDHAIAPEKAEHFHLYWGGDSQEKLHKELEHWPTYYGSDLSGREIAQEINAH.

The signal sequence occupies residues 1–28; it reads MKKKILLMMSLISVFFAWQLTQAKQVLA. Position 66 (His66) interacts with Zn(2+). A disordered region spans residues 126–148; sequence HHHEEADKKHEHNKHSEEGHNHA. The his-rich loop stretch occupies residues 129 to 148; the sequence is EEADKKHEHNKHSEEGHNHA. Zn(2+) contacts are provided by His152, His216, and Glu291.

This sequence belongs to the bacterial solute-binding protein 9 family.

Part of the ATP-binding cassette (ABC) transport system AdcABC involved in zinc import. Binds zinc with high affinity and specificity and delivers it to the membrane permease for translocation into the cytoplasm. In Streptococcus pyogenes serotype M3 (strain ATCC BAA-595 / MGAS315), this protein is Zinc-binding protein AdcA (adcA).